Here is a 509-residue protein sequence, read N- to C-terminus: MATTMMTSSASPPESGELDVASAVASAAAALISPMVMPTSMTNGKDMTKTSQILNEYFNMMVGKRVQLMGDTTSPFSLDTPNPKLMFTPLDLPTTAELMQRCLAVNPFEAKFREANQKISSGSMQPNTSGANQSLEALEANGGSQFSGSNAGTMSDLLLKIPQASLQHSPGIFSNMLLNAGDSEGTTRENLKTADISKLLSVAGDFSAQAPRTADVLNAVLDMHSDRLHTINYLNNKPDFSALLRSPSSSAPNSASVLTNAMAIPSTSGAPFPGTTLLVPPKTVSSYHSPLGASSQPPSTQKSPADGSWDHINGEKQIKKEIPYFNDDAMMLMERSNMSSSGSDQDQSADMSNAGSTASTSTGNPVGRPQNGTPGRGRGRGRSTTADMQPDERRNTILERNKAAAVRYRKRKKEEHDDMMGRVQAMEAEKNQLLAIQTQNQVLRRELERVTALLTERESRCVCLKGVPMSDEQHADHHHRNTNGMYSGSDMLNGLGQINGMQLKLPKLQ.

The span at 283–303 (TVSSYHSPLGASSQPPSTQKS) shows a compositional bias: polar residues. 2 disordered regions span residues 283-318 (TVSS…EKQI) and 337-400 (NMSS…ILER). Residues 308–318 (SWDHINGEKQI) are compositionally biased toward basic and acidic residues. A compositionally biased stretch (low complexity) spans 337–364 (NMSSSGSDQDQSADMSNAGSTASTSTGN). Over residues 390–400 (PDERRNTILER) the composition is skewed to basic and acidic residues. A bZIP domain is found at 391-464 (DERRNTILER…TERESRCVCL (74 aa)). The basic motif stretch occupies residues 393–413 (RRNTILERNKAAAVRYRKRKK). The leucine-zipper stretch occupies residues 419–450 (MMGRVQAMEAEKNQLLAIQTQNQVLRRELERV).

The protein belongs to the bZIP family. In terms of assembly, interacts with serine/threonine kinase pmk-1; perhaps in a manner dependent on dual specificity protein kinase sek-1. In terms of tissue distribution, expressed in intestinal cells.

The protein localises to the nucleus. The protein resides in the chromosome. In terms of biological role, transcription factor which regulates the transcription of various genes, including those involved in innate immunity and oxidative stress responses. Binds to promoter regions of genes, probably at 5'-[GACGTCA]-3' consensus sequences. Together with transcription factor daf-19, involved in regulation of the serotonergic response of ADF neurons to pathogenic food. Modulates response to infection by the Gram-negative bacterium P.aeruginosa, acting downstream of the p38 signal transduction pathway effector serine/threonine kinase pmk-1. May act with transcription factor elt-2 to control p38 gene induction in response to bacterial infection. May be phosphorylated by pmk-1. Regulates transcription of the metallothionein gene, mtl-1, perhaps acting downstream of pmk-1. This is Transcription factor atf-7 from Caenorhabditis elegans.